The following is a 334-amino-acid chain: HTH-type transcriptional repressor PurR (334 aa).

Positions 2-56 constitute an HTH lacI-type domain; sequence ATIKDVARLAGVSTTTVSHVINKTRFVAETTQEKVMKAVDELNYAPSAVARSLKC. The segment at residues 4-23 is a DNA-binding region (H-T-H motif); it reads IKDVARLAGVSTTTVSHVIN. The DNA-binding element occupies 48 to 56; it reads SAVARSLKC. The hypoxanthine site is built by Phe-73, Lys-189, Phe-220, and Asp-274.

Homodimer.

It participates in purine metabolism; purine nucleotide biosynthesis [regulation]. In terms of biological role, is the main repressor of the genes involved in the de novo synthesis of purine nucleotides, regulating purB, purC, purEK, purF, purHD, purL, purMN and guaBA expression. PurR is allosterically activated to bind its cognate DNA by binding the purine corepressors, hypoxanthine or guanine, thereby effecting transcription repression. In Vibrio campbellii (strain ATCC BAA-1116), this protein is HTH-type transcriptional repressor PurR.